Reading from the N-terminus, the 429-residue chain is 3-phosphoshikimate 1-carboxyvinyltransferase (429 aa).

Residues Lys23, Ser24, and Arg28 each coordinate 3-phosphoshikimate. Lys23 contacts phosphoenolpyruvate. Phosphoenolpyruvate-binding residues include Gly95 and Arg123. 3-phosphoshikimate contacts are provided by Ser168, Gln170, Asp316, and Lys343. Phosphoenolpyruvate is bound at residue Gln170. Asp316 serves as the catalytic Proton acceptor. Residues Arg347 and Arg389 each contribute to the phosphoenolpyruvate site.

Belongs to the EPSP synthase family. Monomer.

Its subcellular location is the cytoplasm. The catalysed reaction is 3-phosphoshikimate + phosphoenolpyruvate = 5-O-(1-carboxyvinyl)-3-phosphoshikimate + phosphate. Its pathway is metabolic intermediate biosynthesis; chorismate biosynthesis; chorismate from D-erythrose 4-phosphate and phosphoenolpyruvate: step 6/7. Catalyzes the transfer of the enolpyruvyl moiety of phosphoenolpyruvate (PEP) to the 5-hydroxyl of shikimate-3-phosphate (S3P) to produce enolpyruvyl shikimate-3-phosphate and inorganic phosphate. The sequence is that of 3-phosphoshikimate 1-carboxyvinyltransferase from Oceanobacillus iheyensis (strain DSM 14371 / CIP 107618 / JCM 11309 / KCTC 3954 / HTE831).